The following is a 614-amino-acid chain: MLAGGVRSMPSPLLACWQPILLLVLGSVLSGSATGCPPRCECSAQDRAVLCHRKRFVAVPEGIPTETRLLDLGKNRIKTLNQDEFASFPHLEELELNENIVSAVEPGAFNNLFNLRTLGLRSNRLKLIPLGVFTGLSNLTKLDISENKIVILLDYMFQDLYNLKSLEVGDNDLVYISHRAFSGLNSLEQLTLEKCNLTSIPTEALSHLHGLIVLRLRHLNINAIRDYSFKRLYRLKVLEISHWPYLDTMTPNCLYGLNLTSLSITHCNLTAVPYLAVRHLVYLRFLNLSYNPISTIEGSMLHELLRLQEIQLVGGQLAVVEPYAFRGLNYLRVLNVSGNQLTTLEESVFHSVGNLETLILDSNPLACDCRLLWVFRRRWRLNFNRQQPTCATPEFVQGKEFKDFPDVLLPNYFTCRRARIRDRKAQQVFVDEGHTVQFVCRADGDPPPAILWLSPRKHLVSAKSNGRLTVFPGGTLEVRYAQVQDNGTYLCIAANAGGNDSMPAHLHVRSYSPDWPHQPNKTFAFISNQPGEGEANSTRATVPFPFDIKTLIIATTMGFISFLGVVLFCLVLLFLWSRGKGNTKHNIEIEYVPRKSDAGISSADAPRKFNMKMI.

Positions 1 to 35 (MLAGGVRSMPSPLLACWQPILLLVLGSVLSGSATG) are cleaved as a signal peptide. 2 disulfides stabilise this stretch: cysteine 36–cysteine 42 and cysteine 40–cysteine 51. Residues 36-65 (CPPRCECSAQDRAVLCHRKRFVAVPEGIPT) enclose the LRRNT domain. The Extracellular portion of the chain corresponds to 36–555 (CPPRCECSAQ…FDIKTLIIAT (520 aa)). LRR repeat units lie at residues 66-87 (ETRL…EFAS), 90-111 (HLEE…AFNN), 114-135 (NLRT…VFTG), 138-159 (NLTK…MFQD), 162-183 (NLKS…AFSG), 186-207 (SLEQ…ALSH), 210-231 (GLIV…SFKR), 258-279 (NLTS…AVRH), 282-303 (YLRF…MLHE), 306-327 (RLQE…AFRG), and 330-351 (YLRV…VFHS). The N-linked (GlcNAc...) asparagine glycan is linked to asparagine 138. An N-linked (GlcNAc...) asparagine glycan is attached at asparagine 196. Asparagine 258, asparagine 268, and asparagine 287 each carry an N-linked (GlcNAc...) asparagine glycan. An N-linked (GlcNAc...) asparagine glycan is attached at asparagine 335. Residues 363–417 (NPLACDCRLLWVFRRRWRLNFNRQQPTCATPEFVQGKEFKDFPDVLLPNYFTCRR) form the LRRCT domain. 3 cysteine pairs are disulfide-bonded: cysteine 367–cysteine 390, cysteine 369–cysteine 415, and cysteine 440–cysteine 491. The Ig-like C2-type domain maps to 405–507 (PDVLLPNYFT…GNDSMPAHLH (103 aa)). Residues asparagine 486, asparagine 499, asparagine 520, and asparagine 536 are each glycosylated (N-linked (GlcNAc...) asparagine). Residues 556–576 (TMGFISFLGVVLFCLVLLFLW) traverse the membrane as a helical segment. At 577–614 (SRGKGNTKHNIEIEYVPRKSDAGISSADAPRKFNMKMI) the chain is on the cytoplasmic side. Serine 596 is subject to Phosphoserine.

Homotetramer. Forms a ternary complex with RTN4R/NGFR and RTN4R/TNFRSF19. Interacts with NGRF, RTN4R and MYT1L. In terms of processing, N-glycosylated. Contains predominantly high-mannose glycans.

The protein localises to the cell membrane. Functional component of the Nogo receptor signaling complex (RTN4R/NGFR) in RhoA activation responsible for some inhibition of axonal regeneration by myelin-associated factors. Is also an important negative regulator of oligodentrocyte differentiation and axonal myelination. Acts in conjunction with RTN4 and RTN4R in regulating neuronal precursor cell motility during cortical development. The sequence is that of Leucine-rich repeat and immunoglobulin-like domain-containing nogo receptor-interacting protein 1 (LINGO1) from Pongo abelii (Sumatran orangutan).